The sequence spans 356 residues: 1-deoxy-D-xylulose 5-phosphate reductoisomerase (356 aa).

Positions 7, 8, 9, 10, 31, 33, and 111 each coordinate NADPH. K112 contributes to the 1-deoxy-D-xylulose 5-phosphate binding site. E113 contributes to the NADPH binding site. D131 is a Mn(2+) binding site. Positions 132, 133, 155, and 178 each coordinate 1-deoxy-D-xylulose 5-phosphate. E133 is a Mn(2+) binding site. G184 is a binding site for NADPH. 1-deoxy-D-xylulose 5-phosphate contacts are provided by S191, N196, K197, and E200. A Mn(2+)-binding site is contributed by E200.

It belongs to the DXR family. Mg(2+) serves as cofactor. It depends on Mn(2+) as a cofactor.

The enzyme catalyses 2-C-methyl-D-erythritol 4-phosphate + NADP(+) = 1-deoxy-D-xylulose 5-phosphate + NADPH + H(+). Its pathway is isoprenoid biosynthesis; isopentenyl diphosphate biosynthesis via DXP pathway; isopentenyl diphosphate from 1-deoxy-D-xylulose 5-phosphate: step 1/6. Functionally, catalyzes the NADPH-dependent rearrangement and reduction of 1-deoxy-D-xylulose-5-phosphate (DXP) to 2-C-methyl-D-erythritol 4-phosphate (MEP). The sequence is that of 1-deoxy-D-xylulose 5-phosphate reductoisomerase from Campylobacter jejuni (strain RM1221).